The chain runs to 491 residues: Transcription factor unc-3 (491 aa).

Residues 66–69 (RKSN) are interaction with DNA. Residues 154–173 (CRVLLTHEVMCSRCCEKKSC) form a C5-type zinc finger. Interaction with DNA regions lie at residues 200–207 (NCLKNAGN) and 239–242 (NNSK). Residues 240–261 (NSKHGRRTKRTDASDDSEYSES) are disordered. Residues 269–355 (PVIKALFPSE…SRGTPLRFSY (87 aa)) form the IPT/TIG domain.

Belongs to the COE family. May homodimerise. Interacts with jmjd-3.1. May interact with GFI1 homolog pag-3.

The protein localises to the nucleus. Functionally, transcription factor. Involved in motor neuron fate determination and maintenance, acting as an activator of gene expression in a subset of motor neurons. May act in concert with GFI1 homolog pag-3 in motor neuron fate determination. Required to maintain the expression of transcriptional repressors bnc-1 and cfi-1, which play roles in the cell fate of motor neurons. May play a role in the expression of proteins essential for axonal pathfinding and/or neuronal differentiation in both sensory and motor neurons. Cooperates with jmjd-3.1 and wdr-5.1 to ensure robust transdifferentiation of the Y rectal cell to the PDA motor neuron during larval development. In Caenorhabditis elegans, this protein is Transcription factor unc-3 (unc-3).